A 273-amino-acid polypeptide reads, in one-letter code: ATP synthase subunit a (273 aa).

5 helical membrane-spanning segments follow: residues 42–62 (TLNI…LFIF), 102–122 (VIAP…MMDL), 148–168 (DVSI…FYSI), 213–233 (LFGN…LLPW), and 244–264 (AIFH…LTIV).

The protein belongs to the ATPase A chain family. F-type ATPases have 2 components, CF(1) - the catalytic core - and CF(0) - the membrane proton channel. CF(1) has five subunits: alpha(3), beta(3), gamma(1), delta(1), epsilon(1). CF(0) has three main subunits: a(1), b(2) and c(9-12). The alpha and beta chains form an alternating ring which encloses part of the gamma chain. CF(1) is attached to CF(0) by a central stalk formed by the gamma and epsilon chains, while a peripheral stalk is formed by the delta and b chains.

Its subcellular location is the cell inner membrane. Its function is as follows. Key component of the proton channel; it plays a direct role in the translocation of protons across the membrane. The polypeptide is ATP synthase subunit a (Serratia proteamaculans (strain 568)).